Consider the following 2039-residue polypeptide: Methylcytosine dioxygenase TET1 (2039 aa).

Over residues 1–19 (MSRSRPAKPSKSVKTKLQK) the composition is skewed to basic residues. Disordered regions lie at residues 1-79 (MSRS…AGAA), 119-168 (VVTP…NGEQ), and 227-286 (DNEC…GFPD). 2 stretches are compositionally biased toward basic and acidic residues: residues 53–65 (KRRD…EDKT) and 138–149 (IQDEPGVKHSEN). 2 stretches are compositionally biased toward polar residues: residues 150–168 (DSVP…NGEQ) and 241–265 (QRST…SQVE). The segment at 512–657 (LDLTQGSQAA…NGPKSESMDC (146 aa)) is sufficient for binding to genomic CpG islands. Residues 567 to 608 (ERRKRKACGVCEPCQQKANCGECTYCKNRKNSHQICKKRKCE) form a CXXC-type zinc finger. Residues Cys-574, Cys-577, Cys-580, Cys-586, Cys-589, Cys-592, Cys-602, and Cys-607 each contribute to the Zn(2+) site. Disordered stretches follow at residues 613–670 (KPEA…QRLD), 711–735 (CDAN…NPSP), 820–859 (GAEP…VQPS), 882–906 (QLSE…HQKT), 964–993 (QGYP…SHPL), 1050–1129 (VRNA…KKQE), 1209–1240 (VEPS…QGQP), and 1322–1341 (KREA…DSAQ). Over residues 653–670 (ESMDCSRRGHGEEEQRLD) the composition is skewed to basic and acidic residues. Positions 825–835 (IFNNHPNTHSA) are enriched in polar residues. The span at 840–852 (HPPEKVPNKEPKD) shows a compositional bias: basic and acidic residues. Ser-854 carries the post-translational modification Phosphoserine. Low complexity predominate over residues 884–894 (SEAPSESSSPS). Over residues 895–904 (KPEKDEEAHQ) the composition is skewed to basic and acidic residues. Positions 1053–1064 (AESTPESLVAKN) are enriched in polar residues. The segment covering 1094-1116 (KPKKAQKKARATPHANKRKKKPP) has biased composition (basic residues). 2 stretches are compositionally biased toward polar residues: residues 1214-1227 (SLPT…SGGQ) and 1326-1341 (QTSS…DSAQ). Positions 1371, 1373, 1430, 1456, and 1458 each coordinate Zn(2+). Arg-1499 provides a ligand contact to 2-oxoglutarate. Zn(2+)-binding residues include Cys-1509, Cys-1511, Cys-1527, and Cys-1536. The interval 1528–1541 (SWSMYFNGCKFGRS) is interaction with DNA. Residue Lys-1537 forms a Glycyl lysine isopeptide (Lys-Gly) (interchain with G-Cter in ubiquitin) linkage. Cys-1628 serves as a coordination point for Zn(2+). Cys-1644 contributes to the 2-oxoglutarate binding site. Position 1650 (His-1650) interacts with Zn(2+). 2 residues coordinate Fe cation: His-1652 and Asp-1654. Asn-1657 provides a ligand contact to substrate. Residue His-1685 participates in 2-oxoglutarate binding. A compositionally biased stretch (basic residues) spans 1734–1743 (GKRAKMKQNH). Disordered stretches follow at residues 1734 to 1760 (GKRA…ASST) and 1830 to 1901 (AAHP…LPQL). Over residues 1748–1760 (SHNTKSFSSASST) the composition is skewed to low complexity. The span at 1850–1875 (TSPSEQLTSNQSNQQLPLLSNSQKLA) shows a compositional bias: polar residues. Residues 1880–1895 (EDERHPEADEPQHPED) show a composition bias toward basic and acidic residues. Residue His-1939 coordinates Fe cation. Residue 1954–1956 (RVS) participates in 2-oxoglutarate binding. Position 1960–1962 (1960–1962 (YQH)) interacts with substrate. His-1970 provides a ligand contact to Zn(2+).

The protein belongs to the TET family. As to quaternary structure, interacts with SIN3A; recruits the transcriptional co-repressor SIN3A to gene promoters. Interacts with HCFC1. Interacts (via C-terminus) with OGT. Found in a complex composed of at least SINHCAF, SIN3A, HDAC1, SAP30, RBBP4, OGT and TET1. Interacts with QSER1. Interacts with NONO (via DNA-binding domain); this interaction recruits TET1 to genomic loci. Interacts with FOXA2; this interaction may recruit TET1 to specific enhancers to preserve their unmethylated status and hence allowing gene expression. Interacts with RNF2. Directly interacts (via C-terminus) with the DCAF1 component of the CRL4(VprBP) E3 ubiquitin-protein ligase complex. In terms of assembly, interacts with UHRF1; this interaction induces the recruitment of TET1 to replicating heterochromatin. Interacts with DCAF1. Requires Fe(2+) as cofactor. It depends on Zn(2+) as a cofactor. In terms of processing, glycosylated. Interaction with OGT leads to GlcNAcylation. Monoubiquitinated by the DCX (DDB1-CUL4-X-box) E3 ubiquitin-protein ligase complex called CRL4(VprBP) or CUL4A-RBX1-DDB1-DCAF1/VPRBP complex. Post-translationally, monoubiquitinated by the DCX (DDB1-CUL4-X-box) E3 ubiquitin-protein ligase complex called CRL4(VprBP) or CUL4A-RBX1-DDB1-DCAF1/VPRBP complex; this modification promotes binding to DNA. As to expression, expressed in germinal vesicle (GV) stage and MII-stage oocytes and in early embryos. Also detected somatic tissues, including brain, liver and kidney, but at very low levels. In terms of tissue distribution, predominantly expressed in early embryos. Also expressed in embryonic stem cells and in primordial germ cells. Expressed in adult tissues, including brain cortex, cerebellum, heart, kidney, liver, muscle and spleen, although at much lower levels than isoform 2. In the brain, expressed at higher levels in glial cells than in neurons. Expressed in placenta. Expressed in the pituitary, most probably in thyrotropes. Preferentially expressed in differentiated cells, including in cerebral cortex, cerebellum and thymus. Also expressed in heart, kidney, liver, muscle and spleen at much higher levels than isoform 1. In the brain, expressed at higher levels in neurons than in glial cells. Expressed in the olfactory bulb and in the mammary gland.

It is found in the nucleus. Its subcellular location is the chromosome. The enzyme catalyses a 5-methyl-2'-deoxycytidine in DNA + 2-oxoglutarate + O2 = a 5-hydroxymethyl-2'-deoxycytidine in DNA + succinate + CO2. It carries out the reaction a 5-hydroxymethyl-2'-deoxycytidine in DNA + 2-oxoglutarate + O2 = a 5-formyl-2'-deoxycytidine in DNA + succinate + CO2 + H2O. The catalysed reaction is a 5-formyl-2'-deoxycytidine in DNA + 2-oxoglutarate + O2 = a 5-carboxyl-2'-deoxycytidine in DNA + succinate + CO2 + H(+). In terms of biological role, dioxygenase that plays a key role in active DNA demethylation, by catalyzing the sequential oxidation of the modified genomic base 5-methylcytosine (5mC) into 5-hydroxymethylcytosine (5hmC), 5-formylcytosine (5fC), and 5-carboxylcytosine (5caC). In addition to its role in DNA demethylation, plays a more general role in chromatin regulation by recruiting histone modifying protein complexes to alter histone marks and chromatin accessibility, leading to both activation and repression of gene expression. Plays therefore a role in many biological processes, including stem cell maintenance, T- and B-cell development, inflammation regulation, iron homeostasis, neural activity or DNA repair. Involved in the balance between pluripotency and lineage commitment of cells it plays a role in embryonic stem cells maintenance and inner cell mass cell specification. Together with QSER1, plays an essential role in the protection and maintenance of transcriptional and developmental programs to inhibit the binding of DNMT3A/3B and therefore de novo methylation. May play a role in the pancreatic beta-cell specification during development. In this context, may function as an upstream epigenetic regulator of PAX4 presumably through direct recruitment by FOXA2 to a PAX4 enhancer to preserve its unmethylated status, thereby potentiating PAX4 expression to adopt beta-cell fate during endocrine lineage commitment. Under DNA hypomethylation conditions, such as in female meiotic germ cells, may induce epigenetic reprogramming of pericentromeric heterochromatin (PCH), the constitutive heterochromatin of pericentromeric regions. PCH forms chromocenters in the interphase nucleus and chromocenters cluster at the prophase of meiosis. In this context, may also be essential for chromocenter clustering in a catalytic activity-independent manner, possibly through the recruitment polycomb repressive complex 1 (PRC1) to the chromocenters. During embryonic development, may be required for normal meiotic progression in oocytes and meiotic gene activation. Binds preferentially to DNA containing cytidine-phosphate-guanosine (CpG) dinucleotides over CpH (H=A, T, and C), hemimethylated-CpG and hemimethylated-hydroxymethyl-CpG. Its function is as follows. Dioxygenase that plays a key role in active DNA demethylation. Binds to promoters, particularly to those with high CG content. In hippocampal neurons, isoform 1 regulates the expression of a unique subset of genes compared to isoform 2, although some overlap between both isoforms, hence differentially regulates excitatory synaptic transmission. In hippocampal neuron cell cultures, isoform 1 controls both miniature excitatory postsynaptic current amplitude and frequency. Isoform 1 may regulate genes involved in hippocampal-dependent memory, leading to positive regulation of memory, contrary to isoform 2 that may decrease memory. Dioxygenase that plays a key role in active DNA demethylation. As isoform 1, binds to promoters, particularly to those with high CG content, however displays reduced global chromatin affinity compared with isoform 1, leading to decreased global DNA demethylation compared with isoform 1. Contrary to isoform 1, isoform 2 localizes during S phase to sites of ongoing DNA replication in heterochromatin, causing a significant de novo 5hmC formation, globally, and more so in heterochromatin, including LINE 1 interspersed DNA repeats leading to their activation. In hippocampal neurons, isoform 2 regulates the expression of a unique subset of genes compared with isoform 1, although some overlap between both isoforms, hence differentially regulating excitatory synaptic transmission. In hippocampal neuron cell cultures, isoform 2 controls miniature excitatory postsynaptic current frequency, but not amplitude. Isoform 2 may regulate genes involved in hippocampal-dependent memory, leading to negative regulation of memory, contrary to isoform 1 that may improve memory. In immature and partially differentiated gonadotrope cells, represses luteinizing hormone gene LHB expression directly and does not catalyze 5hmC at the gene promoter. The chain is Methylcytosine dioxygenase TET1 (Tet1) from Mus musculus (Mouse).